We begin with the raw amino-acid sequence, 795 residues long: Phenylalanine--tRNA ligase beta subunit (795 aa).

Residues 39–148 (AGTFNGVKVG…IDAPIGMDFR (110 aa)) enclose the tRNA-binding domain. The B5 domain occupies 401 to 476 (PKPNKVALRR…RIYGYDNIPN (76 aa)). Mg(2+) contacts are provided by Asp454, Asp460, Glu463, and Glu464. The FDX-ACB domain maps to 701-794 (SKFPANRRDI…VSEKFGASLR (94 aa)).

The protein belongs to the phenylalanyl-tRNA synthetase beta subunit family. Type 1 subfamily. In terms of assembly, tetramer of two alpha and two beta subunits. Requires Mg(2+) as cofactor.

The protein localises to the cytoplasm. It catalyses the reaction tRNA(Phe) + L-phenylalanine + ATP = L-phenylalanyl-tRNA(Phe) + AMP + diphosphate + H(+). The chain is Phenylalanine--tRNA ligase beta subunit from Vibrio vulnificus (strain CMCP6).